We begin with the raw amino-acid sequence, 99 residues long: uncharacterized protein (99 aa).

The N-terminal stretch at 1 to 17 is a signal peptide; that stretch reads MMMNAFFPAMALIVLVG. Cysteine 18 carries N-palmitoyl cysteine lipidation. A lipid anchor (S-diacylglycerol cysteine) is attached at cysteine 18.

It localises to the cell membrane. This is an uncharacterized protein from Escherichia coli (strain UTI89 / UPEC).